The sequence spans 182 residues: Large ribosomal subunit protein bL25 (182 aa).

Belongs to the bacterial ribosomal protein bL25 family. CTC subfamily. As to quaternary structure, part of the 50S ribosomal subunit; part of the 5S rRNA/L5/L18/L25 subcomplex. Contacts the 5S rRNA. Binds to the 5S rRNA independently of L5 and L18.

Its function is as follows. This is one of the proteins that binds to the 5S RNA in the ribosome where it forms part of the central protuberance. This is Large ribosomal subunit protein bL25 from Borrelia hermsii (strain HS1 / DAH).